The following is a 693-amino-acid chain: Transcription activator of gluconeogenesis BC1G_14637 (693 aa).

The span at 1-12 shows a compositional bias: acidic residues; that stretch reads MSGETEIDDPEV. The interval 1-75 is disordered; that stretch reads MSGETEIDDP…KFDPKDPLRP (75 aa). Over residues 21–49 the composition is skewed to basic and acidic residues; it reads YSDHEQELDVIGKEGDNQEMAEQKVRPDG. A compositionally biased stretch (polar residues) spans 52-62; sequence NGNTVGATATV. Residues 65–74 are compositionally biased toward basic and acidic residues; it reads PKFDPKDPLR. The segment at residues 84 to 112 is a DNA-binding region (zn(2)-C6 fungal-type); it reads CFACQRAHLTCGDERPCQRCIKRGLADAC. 2 stretches are compositionally biased toward polar residues: residues 144 to 155 and 275 to 287; these read SSNRATAASTPT and SAETPPQDSSAGM. Disordered regions lie at residues 144 to 170, 273 to 299, 350 to 413, and 531 to 567; these read SSNRATAASTPTEPSPGMGNFFSQPDT, SGSAETPPQDSSAGMPQNVGDLGFSNN, TSGS…RNRD, and NLNTNTGSGGPPSSGSSGRGSFTTPRMRPVNLADSNP. Residues 356–367 show a composition bias toward low complexity; the sequence is SPSTDASPAAST. The segment covering 369-379 has biased composition (polar residues); it reads GFESSPTTTNY. Residues 394-408 are compositionally biased toward low complexity; that stretch reads KSGPSGKLGPSGILG.

It belongs to the ERT1/acuK family.

It is found in the nucleus. In terms of biological role, transcription factor which regulates nonfermentable carbon utilization. Activator of gluconeogenetic genes. This Botryotinia fuckeliana (strain B05.10) (Noble rot fungus) protein is Transcription activator of gluconeogenesis BC1G_14637.